Here is a 286-residue protein sequence, read N- to C-terminus: Bifunctional protein FolD (286 aa).

NADP(+)-binding positions include 165–167 (GRS), serine 190, and isoleucine 231.

Belongs to the tetrahydrofolate dehydrogenase/cyclohydrolase family. Homodimer.

The enzyme catalyses (6R)-5,10-methylene-5,6,7,8-tetrahydrofolate + NADP(+) = (6R)-5,10-methenyltetrahydrofolate + NADPH. It carries out the reaction (6R)-5,10-methenyltetrahydrofolate + H2O = (6R)-10-formyltetrahydrofolate + H(+). It participates in one-carbon metabolism; tetrahydrofolate interconversion. Its function is as follows. Catalyzes the oxidation of 5,10-methylenetetrahydrofolate to 5,10-methenyltetrahydrofolate and then the hydrolysis of 5,10-methenyltetrahydrofolate to 10-formyltetrahydrofolate. The protein is Bifunctional protein FolD of Thermodesulfovibrio yellowstonii (strain ATCC 51303 / DSM 11347 / YP87).